The following is a 386-amino-acid chain: Succinate--CoA ligase [ADP-forming] subunit beta (386 aa).

Residues K46, G53–G55, E99, Q102, and E107 contribute to the ATP site. Residues N199 and D213 each contribute to the Mg(2+) site. Residues N264 and G321–V323 contribute to the substrate site.

Belongs to the succinate/malate CoA ligase beta subunit family. As to quaternary structure, heterotetramer of two alpha and two beta subunits. It depends on Mg(2+) as a cofactor.

The enzyme catalyses succinate + ATP + CoA = succinyl-CoA + ADP + phosphate. It carries out the reaction GTP + succinate + CoA = succinyl-CoA + GDP + phosphate. It participates in carbohydrate metabolism; tricarboxylic acid cycle; succinate from succinyl-CoA (ligase route): step 1/1. Succinyl-CoA synthetase functions in the citric acid cycle (TCA), coupling the hydrolysis of succinyl-CoA to the synthesis of either ATP or GTP and thus represents the only step of substrate-level phosphorylation in the TCA. The beta subunit provides nucleotide specificity of the enzyme and binds the substrate succinate, while the binding sites for coenzyme A and phosphate are found in the alpha subunit. This is Succinate--CoA ligase [ADP-forming] subunit beta from Ruthia magnifica subsp. Calyptogena magnifica.